A 122-amino-acid chain; its full sequence is Large ribosomal subunit protein uL14 (122 aa).

It belongs to the universal ribosomal protein uL14 family. In terms of assembly, part of the 50S ribosomal subunit. Forms a cluster with proteins L3 and L19. In the 70S ribosome, L14 and L19 interact and together make contacts with the 16S rRNA in bridges B5 and B8.

Its function is as follows. Binds to 23S rRNA. Forms part of two intersubunit bridges in the 70S ribosome. This chain is Large ribosomal subunit protein uL14, found in Lactobacillus helveticus (strain DPC 4571).